Here is a 290-residue protein sequence, read N- to C-terminus: MLRSGVIAKKVGMTRLFMEDGKQIPVTVLQLDKLQVVAKKTSDSDGYSAVQLGAGTAKAKRTSAPMRGVFAKASVEPKRKLVEFRVDADNLIEVGEEIIADHYFEGQFVDVTGTSIGKGFQGAMKRHNFGGLRASHGVSISHRSHGSTGQCQDPGRVFKGKKMAGHMGAARVTTQNLQIVRTDTDRGLIMIKGAVPGSKGGWVTVKDAVKKPFPENAILPAALASAAAEAAKQAEEAAAAAAAEAEAEAARLAEEQAAAEAESLAQAEAEIAAEGSDAAPEGDADKKDGE.

Position 152 is an N5-methylglutamine (Gln-152). The segment at Ala-250–Glu-290 is disordered. A compositionally biased stretch (low complexity) spans Glu-255 to Glu-274.

This sequence belongs to the universal ribosomal protein uL3 family. As to quaternary structure, part of the 50S ribosomal subunit. Forms a cluster with proteins L14 and L19. Methylated by PrmB.

Functionally, one of the primary rRNA binding proteins, it binds directly near the 3'-end of the 23S rRNA, where it nucleates assembly of the 50S subunit. The sequence is that of Large ribosomal subunit protein uL3 from Jannaschia sp. (strain CCS1).